Reading from the N-terminus, the 208-residue chain is Small ribosomal subunit protein eS8 (208 aa).

Positions 1-40 (MGISRDNWHKRRKTGGKRKPVHKKRKYELGRPPSNTKLGP) are disordered. The span at 8–26 (WHKRRKTGGKRKPVHKKRK) shows a compositional bias: basic residues.

This sequence belongs to the eukaryotic ribosomal protein eS8 family. As to quaternary structure, component of the small ribosomal subunit.

The protein localises to the cytoplasm. Functionally, component of the small ribosomal subunit. The ribosome is a large ribonucleoprotein complex responsible for the synthesis of proteins in the cell. The sequence is that of Small ribosomal subunit protein eS8 (rps8) from Ictalurus punctatus (Channel catfish).